The primary structure comprises 1072 residues: Carbamoyl phosphate synthase large chain (1072 aa).

A carboxyphosphate synthetic domain region spans residues 1-401; sequence MPKYKDISKV…SLLKAVRSLE (401 aa). 12 residues coordinate ATP: Arg-129, Arg-169, Gly-175, Gly-176, Lys-208, Leu-210, Glu-215, Gly-241, Val-242, His-243, Gln-284, and Glu-298. Residues 133–327 form the ATP-grasp 1 domain; sequence KRKMQEIGEP…IAKIAAKIAI (195 aa). Mg(2+)-binding residues include Gln-284, Glu-298, and Asn-300. Positions 284, 298, and 300 each coordinate Mn(2+). Positions 402–544 are oligomerization domain; the sequence is IKAYGLRLDS…YIYSTYCEED (143 aa). The interval 545 to 929 is carbamoyl phosphate synthetic domain; sequence EVETHDIPKV…ALYKALEGAG (385 aa). Residues 671–861 enclose the ATP-grasp 2 domain; that stretch reads SKLLKELNIN…MVKLAVEVAL (191 aa). ATP is bound by residues Arg-707, Lys-746, Ile-748, Glu-752, Gly-777, Val-778, His-779, Ser-780, Gln-820, and Glu-832. The Mg(2+) site is built by Gln-820, Glu-832, and Asn-834. Positions 820, 832, and 834 each coordinate Mn(2+). An MGS-like domain is found at 930–1072; the sequence is LKIPKKGKIL…QKDNVKNLVL (143 aa). The allosteric domain stretch occupies residues 930 to 1072; it reads LKIPKKGKIL…QKDNVKNLVL (143 aa).

The protein belongs to the CarB family. As to quaternary structure, composed of two chains; the small (or glutamine) chain promotes the hydrolysis of glutamine to ammonia, which is used by the large (or ammonia) chain to synthesize carbamoyl phosphate. Tetramer of heterodimers (alpha,beta)4. Mg(2+) serves as cofactor. It depends on Mn(2+) as a cofactor.

The enzyme catalyses hydrogencarbonate + L-glutamine + 2 ATP + H2O = carbamoyl phosphate + L-glutamate + 2 ADP + phosphate + 2 H(+). It carries out the reaction hydrogencarbonate + NH4(+) + 2 ATP = carbamoyl phosphate + 2 ADP + phosphate + 2 H(+). It participates in amino-acid biosynthesis; L-arginine biosynthesis; carbamoyl phosphate from bicarbonate: step 1/1. It functions in the pathway pyrimidine metabolism; UMP biosynthesis via de novo pathway; (S)-dihydroorotate from bicarbonate: step 1/3. In terms of biological role, large subunit of the glutamine-dependent carbamoyl phosphate synthetase (CPSase). CPSase catalyzes the formation of carbamoyl phosphate from the ammonia moiety of glutamine, carbonate, and phosphate donated by ATP, constituting the first step of 2 biosynthetic pathways, one leading to arginine and/or urea and the other to pyrimidine nucleotides. The large subunit (synthetase) binds the substrates ammonia (free or transferred from glutamine from the small subunit), hydrogencarbonate and ATP and carries out an ATP-coupled ligase reaction, activating hydrogencarbonate by forming carboxy phosphate which reacts with ammonia to form carbamoyl phosphate. This chain is Carbamoyl phosphate synthase large chain, found in Caldanaerobacter subterraneus subsp. tengcongensis (strain DSM 15242 / JCM 11007 / NBRC 100824 / MB4) (Thermoanaerobacter tengcongensis).